The primary structure comprises 270 residues: Putative pyruvate, phosphate dikinase regulatory protein (270 aa).

Position 147 to 154 (147 to 154) interacts with ADP; that stretch reads GVSRSSKT.

Belongs to the pyruvate, phosphate/water dikinase regulatory protein family. PDRP subfamily.

The catalysed reaction is N(tele)-phospho-L-histidyl/L-threonyl-[pyruvate, phosphate dikinase] + ADP = N(tele)-phospho-L-histidyl/O-phospho-L-threonyl-[pyruvate, phosphate dikinase] + AMP + H(+). It carries out the reaction N(tele)-phospho-L-histidyl/O-phospho-L-threonyl-[pyruvate, phosphate dikinase] + phosphate + H(+) = N(tele)-phospho-L-histidyl/L-threonyl-[pyruvate, phosphate dikinase] + diphosphate. Bifunctional serine/threonine kinase and phosphorylase involved in the regulation of the pyruvate, phosphate dikinase (PPDK) by catalyzing its phosphorylation/dephosphorylation. This chain is Putative pyruvate, phosphate dikinase regulatory protein, found in Citrifermentans bemidjiense (strain ATCC BAA-1014 / DSM 16622 / JCM 12645 / Bem) (Geobacter bemidjiensis).